The chain runs to 374 residues: Cell division protein C (374 aa).

The MIT domain maps to 11–73; the sequence is ARKYAINAVK…YKRRIEVLKE (63 aa). 144–151 lines the ATP pocket; the sequence is GPPGCGKT.

Belongs to the AAA ATPase family. As to quaternary structure, interacts with CdvB.

Its subcellular location is the cytoplasm. It is found in the nucleoid. In terms of biological role, part of a cell division machinery. The CdvA, CdvB and CdvC proteins polymerize between segregating nucleoids and persist throughout cell division, forming a successively smaller structure during constriction. The polypeptide is Cell division protein C (Sulfolobus acidocaldarius (strain ATCC 33909 / DSM 639 / JCM 8929 / NBRC 15157 / NCIMB 11770)).